Consider the following 873-residue polypeptide: DNA mismatch repair protein MutS (873 aa).

625 to 632 (GPNMGGKS) contributes to the ATP binding site.

It belongs to the DNA mismatch repair MutS family.

Functionally, this protein is involved in the repair of mismatches in DNA. It is possible that it carries out the mismatch recognition step. This protein has a weak ATPase activity. In Xanthomonas oryzae pv. oryzae (strain KACC10331 / KXO85), this protein is DNA mismatch repair protein MutS.